A 199-amino-acid chain; its full sequence is Gene 66 protein (199 aa).

The protein is Gene 66 protein (66) of Mycobacterium (Mycobacteriophage D29).